A 462-amino-acid polypeptide reads, in one-letter code: MKDEKTMDKIVSLAKNRGFVFAGSEIYGGLANSWDYGPLGVELKNNVKKLWWKKFVQDNTYNVGLDCAILMNSEVWVASGHLGGFSDPLMDCKECKSRFRADKIVEDYLTEQGAEVASADGWSNEKLENFIKDKHIKCPKCGKENFTSIRKFNLMFKTFQGVTEDASSEIYLRPETAQGIFVNFKNVQRSSRKKVPFGIGQIGKAFRNEITPGNFTFRTREFEQMELEFFCKPGTDLEWFKYWKDYCWSFLLDLGINKENLRFRDHSAEELVFYSKATSDIEYKFPFGWGELWGVADRTDYDLKKHMDHSGEDMNYLDPSTNEKYVPYVIEPSLGADRVALAFLIDAYDEEELEGGDQRIVLHFHPQIAPIKAAVLPLSKKLSEKALDVYSKISSKFNIEYDETGSIGKRYRRQDEIGTPYCITVDFDTLEDEAVTIRDRDSMSQVRVKIEELEKYLEEKIK.

Residues arginine 100 and glutamate 175 each contribute to the substrate site. ATP contacts are provided by residues 207–209, 217–222, 291–292, and 335–338; these read RNE, FRTREF, EL, and GADR. 222-226 is a binding site for substrate; the sequence is FEQME. Residue 331–335 coordinates substrate; that stretch reads EPSLG.

It belongs to the class-II aminoacyl-tRNA synthetase family. As to quaternary structure, homodimer.

The protein localises to the cytoplasm. The catalysed reaction is tRNA(Gly) + glycine + ATP = glycyl-tRNA(Gly) + AMP + diphosphate. In terms of biological role, catalyzes the attachment of glycine to tRNA(Gly). This is Glycine--tRNA ligase from Clostridium acetobutylicum (strain ATCC 824 / DSM 792 / JCM 1419 / IAM 19013 / LMG 5710 / NBRC 13948 / NRRL B-527 / VKM B-1787 / 2291 / W).